Here is a 957-residue protein sequence, read N- to C-terminus: Glycine dehydrogenase (decarboxylating) (957 aa).

Lysine 708 carries the post-translational modification N6-(pyridoxal phosphate)lysine.

It belongs to the GcvP family. As to quaternary structure, the glycine cleavage system is composed of four proteins: P, T, L and H. Pyridoxal 5'-phosphate serves as cofactor.

The catalysed reaction is N(6)-[(R)-lipoyl]-L-lysyl-[glycine-cleavage complex H protein] + glycine + H(+) = N(6)-[(R)-S(8)-aminomethyldihydrolipoyl]-L-lysyl-[glycine-cleavage complex H protein] + CO2. The glycine cleavage system catalyzes the degradation of glycine. The P protein binds the alpha-amino group of glycine through its pyridoxal phosphate cofactor; CO(2) is released and the remaining methylamine moiety is then transferred to the lipoamide cofactor of the H protein. The polypeptide is Glycine dehydrogenase (decarboxylating) (Pectobacterium atrosepticum (strain SCRI 1043 / ATCC BAA-672) (Erwinia carotovora subsp. atroseptica)).